The following is a 220-amino-acid chain: Nicotinamidase (220 aa).

Asp-11 is an active-site residue. Zn(2+)-binding residues include Asp-53, His-55, and His-94. Lys-119 is an active-site residue. Residue Cys-163 is the Nucleophile of the active site.

Belongs to the isochorismatase family.

The protein resides in the cytoplasm. It localises to the nucleus. Its subcellular location is the peroxisome. The enzyme catalyses nicotinamide + H2O = nicotinate + NH4(+). It functions in the pathway cofactor biosynthesis; nicotinate biosynthesis; nicotinate from nicotinamide: step 1/1. Functionally, catalyzes the deamidation of nicotinamide, an early step in the NAD(+) salvage pathway. This Schizosaccharomyces pombe (strain 972 / ATCC 24843) (Fission yeast) protein is Nicotinamidase (pnc1).